The chain runs to 372 residues: 4-hydroxy-3-methylbut-2-en-1-yl diphosphate synthase (flavodoxin) (372 aa).

[4Fe-4S] cluster-binding residues include Cys270, Cys273, Cys305, and Glu312.

The protein belongs to the IspG family. It depends on [4Fe-4S] cluster as a cofactor.

The catalysed reaction is (2E)-4-hydroxy-3-methylbut-2-enyl diphosphate + oxidized [flavodoxin] + H2O + 2 H(+) = 2-C-methyl-D-erythritol 2,4-cyclic diphosphate + reduced [flavodoxin]. It functions in the pathway isoprenoid biosynthesis; isopentenyl diphosphate biosynthesis via DXP pathway; isopentenyl diphosphate from 1-deoxy-D-xylulose 5-phosphate: step 5/6. Converts 2C-methyl-D-erythritol 2,4-cyclodiphosphate (ME-2,4cPP) into 1-hydroxy-2-methyl-2-(E)-butenyl 4-diphosphate. This Aliivibrio salmonicida (strain LFI1238) (Vibrio salmonicida (strain LFI1238)) protein is 4-hydroxy-3-methylbut-2-en-1-yl diphosphate synthase (flavodoxin).